A 377-amino-acid chain; its full sequence is DNA-directed RNA polymerase subunit alpha (377 aa).

Residues 1–259 (MSDSSHNLLY…KHFSVFEKMD (259 aa)) form an alpha N-terminal domain (alpha-NTD) region. The alpha C-terminal domain (alpha-CTD) stretch occupies residues 279–377 (ILHKLVLGIN…KIRSSKNTKG (99 aa)).

This sequence belongs to the RNA polymerase alpha chain family. As to quaternary structure, homodimer. The RNAP catalytic core consists of 2 alpha, 1 beta, 1 beta' and 1 omega subunit. When a sigma factor is associated with the core the holoenzyme is formed, which can initiate transcription.

The catalysed reaction is RNA(n) + a ribonucleoside 5'-triphosphate = RNA(n+1) + diphosphate. In terms of biological role, DNA-dependent RNA polymerase catalyzes the transcription of DNA into RNA using the four ribonucleoside triphosphates as substrates. This Chlamydia trachomatis serovar L2 (strain ATCC VR-902B / DSM 19102 / 434/Bu) protein is DNA-directed RNA polymerase subunit alpha.